The following is a 518-amino-acid chain: Two-component response regulator-like PRR1 (518 aa).

In terms of domain architecture, Response regulatory spans 29–147; that stretch reads RILLCDSDPS…ELLNLWTHVW (119 aa). 3 disordered regions span residues 172 to 241, 266 to 305, and 483 to 518; these read PSDA…PGVM, TPTTSSFDSELQKGGNRLDSSDHRGNFSSTTDRSDTGTDV, and VRQANYTDITSTGDDISEDEDDDPSSREVEMVSSPE. The span at 196–212 shows a compositional bias: polar residues; sequence NQETSTSNQHEYESNPS. In terms of domain architecture, CCT spans 443 to 485; sequence RAAALAKFRLKRKERCFDKKVRYVNRKKLAETRPRVRGQFVRQ.

It belongs to the ARR-like family. Interacts with PIL13. Interacts with PIL15.

The protein resides in the nucleus. Controls photoperiodic flowering response. Seems to be one of the component of the circadian clock. Expression of several members of the ARR-like family is controlled by circadian rhythm. The particular coordinated sequential expression of PRR73, PRR37, PRR95, PRR59 and PPR1 result to circadian waves that may be at the basis of the endogenous circadian clock. The sequence is that of Two-component response regulator-like PRR1 (PRR1) from Oryza sativa subsp. japonica (Rice).